We begin with the raw amino-acid sequence, 353 residues long: Holliday junction branch migration complex subunit RuvB (353 aa).

The tract at residues 4-185 (ADRLITAAGG…FGIVQRLEFY (182 aa)) is large ATPase domain (RuvB-L). Residues isoleucine 24, arginine 25, glycine 66, lysine 69, threonine 70, threonine 71, 132–134 (EDF), arginine 175, tyrosine 185, and arginine 222 each bind ATP. Residue threonine 70 participates in Mg(2+) binding. Residues 186–256 (NIADLSTIVS…TADKALNLLD (71 aa)) are small ATPAse domain (RuvB-S). Residues 259-353 (EHGFDHQDRR…DDVVDDPADL (95 aa)) are head domain (RuvB-H). 3 residues coordinate DNA: arginine 295, arginine 314, and arginine 319.

The protein belongs to the RuvB family. As to quaternary structure, homohexamer. Forms an RuvA(8)-RuvB(12)-Holliday junction (HJ) complex. HJ DNA is sandwiched between 2 RuvA tetramers; dsDNA enters through RuvA and exits via RuvB. An RuvB hexamer assembles on each DNA strand where it exits the tetramer. Each RuvB hexamer is contacted by two RuvA subunits (via domain III) on 2 adjacent RuvB subunits; this complex drives branch migration. In the full resolvosome a probable DNA-RuvA(4)-RuvB(12)-RuvC(2) complex forms which resolves the HJ.

Its subcellular location is the cytoplasm. It catalyses the reaction ATP + H2O = ADP + phosphate + H(+). The RuvA-RuvB-RuvC complex processes Holliday junction (HJ) DNA during genetic recombination and DNA repair, while the RuvA-RuvB complex plays an important role in the rescue of blocked DNA replication forks via replication fork reversal (RFR). RuvA specifically binds to HJ cruciform DNA, conferring on it an open structure. The RuvB hexamer acts as an ATP-dependent pump, pulling dsDNA into and through the RuvAB complex. RuvB forms 2 homohexamers on either side of HJ DNA bound by 1 or 2 RuvA tetramers; 4 subunits per hexamer contact DNA at a time. Coordinated motions by a converter formed by DNA-disengaged RuvB subunits stimulates ATP hydrolysis and nucleotide exchange. Immobilization of the converter enables RuvB to convert the ATP-contained energy into a lever motion, pulling 2 nucleotides of DNA out of the RuvA tetramer per ATP hydrolyzed, thus driving DNA branch migration. The RuvB motors rotate together with the DNA substrate, which together with the progressing nucleotide cycle form the mechanistic basis for DNA recombination by continuous HJ branch migration. Branch migration allows RuvC to scan DNA until it finds its consensus sequence, where it cleaves and resolves cruciform DNA. This chain is Holliday junction branch migration complex subunit RuvB, found in Pseudomonas savastanoi pv. phaseolicola (strain 1448A / Race 6) (Pseudomonas syringae pv. phaseolicola (strain 1448A / Race 6)).